Here is a 429-residue protein sequence, read N- to C-terminus: MKTSILILAAGLGTRMKSQKPKVLQELCQKSMILHILKKAFALSDDVSVVLSHQKERVEKEILEHFPKTQILEQDLQNYPGTAGALRGFEPKNERVLILCGDMPLVEQTSLEALLGNNAKLNLAVFKARDSKSYGRVVIKDDGVEKIVEFKDANAREREINTCNAGVYVIDSRLLKELLPLIDNNNAAKEYYLTDIVKLAKEKDVMIKAVFVDEDEFMGINDKFELSIAENFMQEKIKKYWMQQGVIFHLPQSTFIGVDVKFVGECEVYENVRIGGKSKIINSIIKSSSVIENSIVENSDVGPLAHLRPNCELKNTHIGNFVECKNANLNAVKAGHLSYLGDCEIDSGTNIGCGTITCNYDGVKKYKTIIGKNVFVGSDTQFIAPVKIEDEVIIAAGSTVSVNVEKGALFINRTGHKIIKNYYYKKFQK.

The pyrophosphorylase stretch occupies residues 1–223; that stretch reads MKTSILILAA…EDEFMGINDK (223 aa). Residues 8 to 11, lysine 22, glutamine 74, and 81 to 82 each bind UDP-N-acetyl-alpha-D-glucosamine; these read LAAG and GT. Aspartate 102 is a Mg(2+) binding site. UDP-N-acetyl-alpha-D-glucosamine is bound by residues glycine 135, glutamate 149, asparagine 164, and asparagine 221. Asparagine 221 serves as a coordination point for Mg(2+). Residues 224 to 244 form a linker region; it reads FELSIAENFMQEKIKKYWMQQ. The segment at 245-429 is N-acetyltransferase; it reads GVIFHLPQST…KNYYYKKFQK (185 aa). The UDP-N-acetyl-alpha-D-glucosamine site is built by arginine 308 and lysine 325. Histidine 336 (proton acceptor) is an active-site residue. The UDP-N-acetyl-alpha-D-glucosamine site is built by tyrosine 339 and asparagine 350. Acetyl-CoA-binding positions include 359 to 360, serine 378, alanine 396, and arginine 413; that span reads NY.

The protein in the N-terminal section; belongs to the N-acetylglucosamine-1-phosphate uridyltransferase family. This sequence in the C-terminal section; belongs to the transferase hexapeptide repeat family. Homotrimer. It depends on Mg(2+) as a cofactor.

It localises to the cytoplasm. It catalyses the reaction alpha-D-glucosamine 1-phosphate + acetyl-CoA = N-acetyl-alpha-D-glucosamine 1-phosphate + CoA + H(+). The catalysed reaction is N-acetyl-alpha-D-glucosamine 1-phosphate + UTP + H(+) = UDP-N-acetyl-alpha-D-glucosamine + diphosphate. Its pathway is nucleotide-sugar biosynthesis; UDP-N-acetyl-alpha-D-glucosamine biosynthesis; N-acetyl-alpha-D-glucosamine 1-phosphate from alpha-D-glucosamine 6-phosphate (route II): step 2/2. It participates in nucleotide-sugar biosynthesis; UDP-N-acetyl-alpha-D-glucosamine biosynthesis; UDP-N-acetyl-alpha-D-glucosamine from N-acetyl-alpha-D-glucosamine 1-phosphate: step 1/1. The protein operates within bacterial outer membrane biogenesis; LPS lipid A biosynthesis. Functionally, catalyzes the last two sequential reactions in the de novo biosynthetic pathway for UDP-N-acetylglucosamine (UDP-GlcNAc). The C-terminal domain catalyzes the transfer of acetyl group from acetyl coenzyme A to glucosamine-1-phosphate (GlcN-1-P) to produce N-acetylglucosamine-1-phosphate (GlcNAc-1-P), which is converted into UDP-GlcNAc by the transfer of uridine 5-monophosphate (from uridine 5-triphosphate), a reaction catalyzed by the N-terminal domain. The chain is Bifunctional protein GlmU from Campylobacter jejuni subsp. doylei (strain ATCC BAA-1458 / RM4099 / 269.97).